The sequence spans 36 residues: Esculentin-2R (36 aa).

Cysteine 30 and cysteine 36 form a disulfide bridge.

Expressed by the skin glands.

It localises to the secreted. Its function is as follows. Antimicrobial peptide. This is Esculentin-2R from Pelophylax ridibundus (Marsh frog).